The chain runs to 505 residues: 2,3-bisphosphoglycerate-independent phosphoglycerate mutase (505 aa).

Asp12 and Ser62 together coordinate Mn(2+). The Phosphoserine intermediate role is filled by Ser62. Substrate-binding positions include His123, Arg153–Asp154, Arg185, Arg191, Arg257–Arg260, and Lys330. Positions 397, 401, 438, 439, and 456 each coordinate Mn(2+).

The protein belongs to the BPG-independent phosphoglycerate mutase family. As to quaternary structure, monomer. Requires Mn(2+) as cofactor.

It carries out the reaction (2R)-2-phosphoglycerate = (2R)-3-phosphoglycerate. The protein operates within carbohydrate degradation; glycolysis; pyruvate from D-glyceraldehyde 3-phosphate: step 3/5. Functionally, catalyzes the interconversion of 2-phosphoglycerate and 3-phosphoglycerate. This Staphylococcus aureus (strain MRSA252) protein is 2,3-bisphosphoglycerate-independent phosphoglycerate mutase.